A 640-amino-acid polypeptide reads, in one-letter code: Threonine--tRNA ligase (640 aa).

The TGS domain occupies 1-61 (MPAITLPDGS…EHDAYVEIVT (61 aa)). The segment at 242–533 (DHRRLGRTQD…LIEHYGGALP (292 aa)) is catalytic. 3 residues coordinate Zn(2+): Cys-333, His-384, and His-510.

It belongs to the class-II aminoacyl-tRNA synthetase family. In terms of assembly, homodimer. Zn(2+) serves as cofactor.

Its subcellular location is the cytoplasm. The enzyme catalyses tRNA(Thr) + L-threonine + ATP = L-threonyl-tRNA(Thr) + AMP + diphosphate + H(+). Catalyzes the attachment of threonine to tRNA(Thr) in a two-step reaction: L-threonine is first activated by ATP to form Thr-AMP and then transferred to the acceptor end of tRNA(Thr). Also edits incorrectly charged L-seryl-tRNA(Thr). The protein is Threonine--tRNA ligase of Halorhodospira halophila (strain DSM 244 / SL1) (Ectothiorhodospira halophila (strain DSM 244 / SL1)).